A 193-amino-acid chain; its full sequence is MKNLLLILIGAVLVNNFVLARFLGLCPFLGVSRKVETALGMGMAVTFVMVVASGCTWVLQYLVLTPYHLDYLQTIAFILVIATLVQMVEMIVRKSSPVLYQSLGIFLPLITTNCAVLGLAVLNIQQGYSFVQSLVFAFGGAVGFTLALVLFAGLRERLRLCPVPAAFRGTPIELITAGLLALAFMGFAGLVPG.

The next 6 membrane-spanning stretches (helical) occupy residues 4–24 (LLLILIGAVLVNNFVLARFLG), 39–59 (LGMGMAVTFVMVVASGCTWVL), 72–92 (LQTIAFILVIATLVQMVEMIV), 102–122 (SLGIFLPLITTNCAVLGLAVL), 134–154 (LVFAFGGAVGFTLALVLFAGL), and 171–191 (PIELITAGLLALAFMGFAGLV).

The protein belongs to the NqrDE/RnfAE family. The complex is composed of six subunits: RnfA, RnfB, RnfC, RnfD, RnfE and RnfG.

Its subcellular location is the cell inner membrane. Functionally, part of a membrane-bound complex that couples electron transfer with translocation of ions across the membrane. In Syntrophotalea carbinolica (strain DSM 2380 / NBRC 103641 / GraBd1) (Pelobacter carbinolicus), this protein is Ion-translocating oxidoreductase complex subunit A.